The chain runs to 397 residues: Odorant receptor 85a (397 aa).

The Cytoplasmic portion of the chain corresponds to 1–46 (MIFKYIQEPVLGSLFRSRDSLIYLNRSIDQMGWRLPPRTKPYWWLY). The chain crosses the membrane as a helical span at residues 47 to 67 (YIWTLVVIVLVFIFIPYGLIM). Residues 68–83 (TGIKEFKNFTTTDLFT) lie on the Extracellular side of the membrane. An N-linked (GlcNAc...) asparagine glycan is attached at Asn-75. Residues 84–104 (YVQVPVNTNASIMKGIIVLFM) traverse the membrane as a helical segment. Over 105–142 (RRRFSRAQKMMDAMDIRCTKMEEKVQVHRAAALCNRVV) the chain is Cytoplasmic. A helical membrane pass occupies residues 143-163 (VIYHCIYFGYLSMALTGALVI). Over 164–192 (GKTPFCLYNPLVNPDDHFYLATAIESVTM) the chain is Extracellular. The helical transmembrane segment at 193-213 (AGIILANLILDVYPIIYVVVL) threads the bilayer. At 214–262 (RIHMELLSERIKTLRTDVEKGDDQHYAELVECVKDHKLIVEYGNTLRPM) the chain is on the cytoplasmic side. The helical transmembrane segment at 263-283 (ISATMFIQLLSVGLLLGLAAV) threads the bilayer. At 284–294 (SMQFYNTVMER) the chain is on the extracellular side. The chain crosses the membrane as a helical span at residues 295 to 315 (VVSGVYTIAILSQTFPFCYVC). At 316–347 (EQLSSDCESLTNTLFHSKWIGAERRYRTTMLY) the chain is on the cytoplasmic side. A helical transmembrane segment spans residues 348–368 (FIHNVQQSILFTAGGIFPICL). Topologically, residues 369-397 (NTNIKMAKFAFSVVTIVNEMDLAEKLRRE) are extracellular.

Belongs to the insect chemoreceptor superfamily. Heteromeric odorant receptor channel (TC 1.A.69) family. Or2a subfamily. Interacts with Orco. Complexes exist early in the endomembrane system in olfactory sensory neurons (OSNs), coupling these complexes to the conserved ciliary trafficking pathway. As to expression, expressed in olfactory sensory neurons in the antenna.

The protein localises to the cell membrane. Functionally, odorant receptor which mediates acceptance or avoidance behavior, depending on its substrates. The odorant receptor repertoire encodes a large collection of odor stimuli that vary widely in identity, intensity, and duration. May form a complex with Orco to form odorant-sensing units, providing sensitive and prolonged odorant signaling and calcium permeability. This Drosophila melanogaster (Fruit fly) protein is Odorant receptor 85a (Or85a).